Consider the following 309-residue polypeptide: Taste receptor type 2 member 8 (309 aa).

Residues 1 to 7 (MFSPADN) lie on the Extracellular side of the membrane. The helical transmembrane segment at 8-28 (IFIILITGEFILGILGNGYIA) threads the bilayer. Residues 29–50 (LVNWIDWIKKKKISTVDYILTN) are Cytoplasmic-facing. Residues 51–71 (LVIARICLISVMVVNGIVIVL) form a helical membrane-spanning segment. The Extracellular segment spans residues 72–82 (NPDVYTKNKQQ). The chain crosses the membrane as a helical span at residues 83 to 103 (IVIFTFWTFANYLNMWITTCL). At 104-131 (NVFYFLKIASSSHPLFLWLKWKIDMVVH) the chain is on the cytoplasmic side. A helical transmembrane segment spans residues 132–152 (WILLGCFAISLLVSLIAAIVL). Over 153-184 (SCDYRFHAIAKHKRNITEMFHVSKIPYFEPLT) the chain is Extracellular. N-linked (GlcNAc...) asparagine glycosylation is present at Asn167. Residues 185-205 (LFNLFAIVPFIVSLISFFLLV) traverse the membrane as a helical segment. Over 206 to 239 (RSLWRHTKQIKLYATGSRDPSTEVHVRAIKTMTS) the chain is Cytoplasmic. The helical transmembrane segment at 240–260 (FIFFFFLYYISSILMTFSYLM) threads the bilayer. Residues 261–266 (TKYKLA) lie on the Extracellular side of the membrane. The helical transmembrane segment at 267 to 287 (VEFGEIAAILYPLGHSLILIV) threads the bilayer. Topologically, residues 288-309 (LNNKLRQTFVRMLTCRKIACMI) are cytoplasmic.

This sequence belongs to the G-protein coupled receptor T2R family. As to expression, expressed in subsets of taste receptor cells of the tongue and palate epithelium and exclusively in gustducin-positive cells.

It localises to the membrane. In terms of biological role, receptor that may play a role in the perception of bitterness and is gustducin-linked. May play a role in sensing the chemical composition of the gastrointestinal content. The activity of this receptor may stimulate alpha gustducin, mediate PLC-beta-2 activation and lead to the gating of TRPM5. This is Taste receptor type 2 member 8 (TAS2R8) from Homo sapiens (Human).